Here is a 280-residue protein sequence, read N- to C-terminus: Undecaprenyl-diphosphatase (280 aa).

The next 8 membrane-spanning stretches (helical) occupy residues 2–22, 45–65, 86–106, 114–134, 147–167, 188–208, 223–243, and 255–275; these read FIIE…TEWL, AFME…VVVI, WQLW…GLFL, FYNL…FIYL, LASL…LALF, SVVT…ASGW, GQIF…LVVI, and FTIF…YAAI.

Belongs to the UppP family.

It is found in the cell membrane. It carries out the reaction di-trans,octa-cis-undecaprenyl diphosphate + H2O = di-trans,octa-cis-undecaprenyl phosphate + phosphate + H(+). In terms of biological role, catalyzes the dephosphorylation of undecaprenyl diphosphate (UPP). Confers resistance to bacitracin. In Streptococcus sanguinis (strain SK36), this protein is Undecaprenyl-diphosphatase.